Reading from the N-terminus, the 172-residue chain is Shikimate kinase (172 aa).

14–19 (GAGKST) contributes to the ATP binding site. Ser-18 is a binding site for Mg(2+). 3 residues coordinate substrate: Asp-36, Arg-60, and Gly-82. Arg-120 lines the ATP pocket. Arg-140 is a binding site for substrate. Gln-157 provides a ligand contact to ATP.

This sequence belongs to the shikimate kinase family. In terms of assembly, monomer. It depends on Mg(2+) as a cofactor.

The protein localises to the cytoplasm. It catalyses the reaction shikimate + ATP = 3-phosphoshikimate + ADP + H(+). Its pathway is metabolic intermediate biosynthesis; chorismate biosynthesis; chorismate from D-erythrose 4-phosphate and phosphoenolpyruvate: step 5/7. Its function is as follows. Catalyzes the specific phosphorylation of the 3-hydroxyl group of shikimic acid using ATP as a cosubstrate. This is Shikimate kinase from Pseudoalteromonas translucida (strain TAC 125).